A 449-amino-acid polypeptide reads, in one-letter code: MGKYFGTDGVRGEANVELTPELAFKLGRFGGYVLSQHETDVPRVFVARDTRISGQMLEAALIAGLLSVGIHVYKLGVLATPGVAHLVKTEKASAGVMISASHNPAQDNGIKFFAGDGFKLDDALEAEIEALLDAEEDTLPRPSAQGLGDVVEYPEGLRKYQQFLVSTGTDLDGMKVALDTANGAAATSARQIFVDLGADLTVMAEKPDGLNINEGVGSTHPEKLQELVKETGSQIGLAFDGDSDRLIAVDENGVLVDGDRIMYIVGKYLADRGLLAKNTIVTTVMSNLGFHKALDREGIEKAVTAVGDRYVVEEMRKEGYNVGGEQSGHVILMDYNTTGDGQLTAVQLTKIMKETGKKLSELAAEVTIYPQKLVNIRVENSMKDKAMEVPAIAAIIEKMEAEMAGNGRILVRPSGTEPLLRVMAEAPTDAEVDYYVDTIADVVRAEIGS.

Residue Ser-101 is the Phosphoserine intermediate of the active site. The Mg(2+) site is built by Ser-101, Asp-240, Asp-242, and Asp-244. Ser-101 carries the phosphoserine modification.

Belongs to the phosphohexose mutase family. Mg(2+) serves as cofactor. In terms of processing, activated by phosphorylation.

The catalysed reaction is alpha-D-glucosamine 1-phosphate = D-glucosamine 6-phosphate. Functionally, catalyzes the conversion of glucosamine-6-phosphate to glucosamine-1-phosphate. The protein is Phosphoglucosamine mutase of Streptococcus suis (strain 98HAH33).